We begin with the raw amino-acid sequence, 303 residues long: Plasmodesmata-located protein 1 (303 aa).

An N-terminal signal peptide occupies residues 1-21 (MKLTYQFFIFWFFLPFFAISG). The Extracellular segment spans residues 22-268 (DDDYKNLIFK…GEKRQHTERT (247 aa)). Gnk2-homologous domains are found at residues 27 to 136 (NLIF…SSGF) and 141 to 248 (GTEM…YYSH). 6 disulfide bridges follow: Cys-33-Cys-108, Cys-84-Cys-93, Cys-96-Cys-127, Cys-149-Cys-226, Cys-202-Cys-211, and Cys-214-Cys-239. A helical membrane pass occupies residues 269–289 (IALAVGGVFVLGFVIVCLLVL). Positions 269–289 (IALAVGGVFVLGFVIVCLLVL) are necessary and sufficient for plasmodesmal targeting. At 290–303 (RSAMKKKSNKYDAY) the chain is on the cytoplasmic side.

This sequence belongs to the cysteine-rich repeat secretory protein family. Plasmodesmata-located proteins (PDLD) subfamily. In terms of assembly, interacts with AZI1. Interacts with PDLP5. Does not interact with DIR1. As to quaternary structure, (Microbial infection) Interacts with Grapevine fanleaf virus (GFLV) 2B-MP. Interacts with Cauliflower mosaic virus (CaMV) movement protein. In terms of tissue distribution, highly expressed in cell suspension. Expressed in epidermal and spongy mesophyll cells, and the cell wall interface at the base of the leaf trichome (at protein level). Expressed in haustoria-containing cells.

The protein resides in the cell membrane. It is found in the cell junction. The protein localises to the plasmodesma. In terms of biological role, modulates cell-to-cell trafficking. Required for systemic acquired resistance (SAR) which is mediated by the signaling molecules azelaic acid (AzA), glycerol-3-phosphate (G3P), and salicylic acid (SA). Required for the proper localization and stability of AZI1 which is involved in SAR. Mediates callose deposition during downy mildew fungal infection around haustoria. Haustoria are unicellular protrusions from hyphae and function as the site of molecular exchange of nutrients and effectors between host and pathogen. In Arabidopsis thaliana (Mouse-ear cress), this protein is Plasmodesmata-located protein 1.